A 207-amino-acid polypeptide reads, in one-letter code: Cytochrome c biogenesis ATP-binding export protein CcmA (207 aa).

Residues L6–S207 form the ABC transporter domain. G38 to T45 is a binding site for ATP.

Belongs to the ABC transporter superfamily. CcmA exporter (TC 3.A.1.107) family. As to quaternary structure, the complex is composed of two ATP-binding proteins (CcmA) and two transmembrane proteins (CcmB).

It is found in the cell inner membrane. The enzyme catalyses heme b(in) + ATP + H2O = heme b(out) + ADP + phosphate + H(+). Its function is as follows. Part of the ABC transporter complex CcmAB involved in the biogenesis of c-type cytochromes; once thought to export heme, this seems not to be the case, but its exact role is uncertain. Responsible for energy coupling to the transport system. The chain is Cytochrome c biogenesis ATP-binding export protein CcmA from Methylococcus capsulatus (strain ATCC 33009 / NCIMB 11132 / Bath).